The following is a 458-amino-acid chain: Bifunctional protein GlmU (458 aa).

Residues 1 to 224 (MTVIALAAGK…PKVAVGVNNQ (224 aa)) are pyrophosphorylase. UDP-N-acetyl-alpha-D-glucosamine contacts are provided by residues 6–9 (LAAG), K20, Q71, and 76–77 (GT). Mg(2+) is bound at residue D99. Residues G136, E150, N165, and N222 each contribute to the UDP-N-acetyl-alpha-D-glucosamine site. A Mg(2+)-binding site is contributed by N222. Residues 225–245 (LELARATRLLFKRKALRLMED) form a linker region. An N-acetyltransferase region spans residues 246–458 (GVLMIDPRTV…TAETEEKEQV (213 aa)). R328 and K346 together coordinate UDP-N-acetyl-alpha-D-glucosamine. H358 acts as the Proton acceptor in catalysis. Y361 and N372 together coordinate UDP-N-acetyl-alpha-D-glucosamine. Acetyl-CoA is bound by residues 381–382 (NY), S401, S419, and R436.

The protein in the N-terminal section; belongs to the N-acetylglucosamine-1-phosphate uridyltransferase family. This sequence in the C-terminal section; belongs to the transferase hexapeptide repeat family. Homotrimer. Mg(2+) is required as a cofactor.

It localises to the cytoplasm. It catalyses the reaction alpha-D-glucosamine 1-phosphate + acetyl-CoA = N-acetyl-alpha-D-glucosamine 1-phosphate + CoA + H(+). The enzyme catalyses N-acetyl-alpha-D-glucosamine 1-phosphate + UTP + H(+) = UDP-N-acetyl-alpha-D-glucosamine + diphosphate. It participates in nucleotide-sugar biosynthesis; UDP-N-acetyl-alpha-D-glucosamine biosynthesis; N-acetyl-alpha-D-glucosamine 1-phosphate from alpha-D-glucosamine 6-phosphate (route II): step 2/2. The protein operates within nucleotide-sugar biosynthesis; UDP-N-acetyl-alpha-D-glucosamine biosynthesis; UDP-N-acetyl-alpha-D-glucosamine from N-acetyl-alpha-D-glucosamine 1-phosphate: step 1/1. Its pathway is bacterial outer membrane biogenesis; LPS lipid A biosynthesis. In terms of biological role, catalyzes the last two sequential reactions in the de novo biosynthetic pathway for UDP-N-acetylglucosamine (UDP-GlcNAc). The C-terminal domain catalyzes the transfer of acetyl group from acetyl coenzyme A to glucosamine-1-phosphate (GlcN-1-P) to produce N-acetylglucosamine-1-phosphate (GlcNAc-1-P), which is converted into UDP-GlcNAc by the transfer of uridine 5-monophosphate (from uridine 5-triphosphate), a reaction catalyzed by the N-terminal domain. The protein is Bifunctional protein GlmU of Bdellovibrio bacteriovorus (strain ATCC 15356 / DSM 50701 / NCIMB 9529 / HD100).